A 396-amino-acid chain; its full sequence is Elongation factor Tu (396 aa).

Residues Lys10–Glu206 form the tr-type G domain. The segment at Gly19–Thr26 is G1. A GTP-binding site is contributed by Gly19 to Thr26. Thr26 provides a ligand contact to Mg(2+). Positions Gly60–Ser64 are G2. A G3 region spans residues Asp81–Gly84. Residues Asp81–His85 and Asn136–Asp139 each bind GTP. Positions Asn136–Asp139 are G4. Positions Ser174–Leu176 are G5.

It belongs to the TRAFAC class translation factor GTPase superfamily. Classic translation factor GTPase family. EF-Tu/EF-1A subfamily. As to quaternary structure, monomer.

It is found in the cytoplasm. The enzyme catalyses GTP + H2O = GDP + phosphate + H(+). Its function is as follows. GTP hydrolase that promotes the GTP-dependent binding of aminoacyl-tRNA to the A-site of ribosomes during protein biosynthesis. The protein is Elongation factor Tu of Rhodopseudomonas palustris (strain HaA2).